Here is a 388-residue protein sequence, read N- to C-terminus: Protochlorophyllide reductase A, chloroplastic (388 aa).

The N-terminal 74 residues, 1–74 (MALQLLPSTL…KPSGKKTLRQ (74 aa)), are a transit peptide targeting the chloroplast.

The protein belongs to the short-chain dehydrogenases/reductases (SDR) family. POR subfamily.

The protein localises to the plastid. It is found in the chloroplast. The catalysed reaction is chlorophyllide a + NADP(+) = protochlorophyllide a + NADPH + H(+). It participates in porphyrin-containing compound metabolism; chlorophyll biosynthesis. Phototransformation of protochlorophyllide (Pchlide) to chlorophyllide (Chlide). The chain is Protochlorophyllide reductase A, chloroplastic (PORA) from Triticum aestivum (Wheat).